A 601-amino-acid chain; its full sequence is Phosphomethylpyrimidine synthase (601 aa).

Disordered stretches follow at residues 1–31 (MTNK…GKSI) and 100–141 (AGRP…RDGQ). A compositionally biased stretch (basic and acidic residues) spans 100–112 (AGRPVRPEDDGIK). Substrate contacts are provided by residues asparagine 208, methionine 237, tyrosine 266, histidine 302, 322-324 (SRG), 363-366 (DGLR), and glutamate 402. Histidine 406 provides a ligand contact to Zn(2+). Residue tyrosine 429 coordinates substrate. Histidine 470 provides a ligand contact to Zn(2+). [4Fe-4S] cluster is bound by residues cysteine 550, cysteine 553, and cysteine 558.

It belongs to the ThiC family. The cofactor is [4Fe-4S] cluster.

The enzyme catalyses 5-amino-1-(5-phospho-beta-D-ribosyl)imidazole + S-adenosyl-L-methionine = 4-amino-2-methyl-5-(phosphooxymethyl)pyrimidine + CO + 5'-deoxyadenosine + formate + L-methionine + 3 H(+). It participates in cofactor biosynthesis; thiamine diphosphate biosynthesis. In terms of biological role, catalyzes the synthesis of the hydroxymethylpyrimidine phosphate (HMP-P) moiety of thiamine from aminoimidazole ribotide (AIR) in a radical S-adenosyl-L-methionine (SAM)-dependent reaction. This is Phosphomethylpyrimidine synthase from Streptomyces avermitilis (strain ATCC 31267 / DSM 46492 / JCM 5070 / NBRC 14893 / NCIMB 12804 / NRRL 8165 / MA-4680).